A 203-amino-acid polypeptide reads, in one-letter code: Glycerol-3-phosphate acyltransferase (203 aa).

4 helical membrane passes run 6-26 (LTLL…AVLV), 82-102 (AISL…PIFF), 118-138 (APIG…LVLI), and 141-161 (YSSL…WWLD).

It belongs to the PlsY family. In terms of assembly, probably interacts with PlsX.

It localises to the cell inner membrane. The enzyme catalyses an acyl phosphate + sn-glycerol 3-phosphate = a 1-acyl-sn-glycero-3-phosphate + phosphate. The protein operates within lipid metabolism; phospholipid metabolism. Functionally, catalyzes the transfer of an acyl group from acyl-phosphate (acyl-PO(4)) to glycerol-3-phosphate (G3P) to form lysophosphatidic acid (LPA). This enzyme utilizes acyl-phosphate as fatty acyl donor, but not acyl-CoA or acyl-ACP. This is Glycerol-3-phosphate acyltransferase from Shewanella sp. (strain ANA-3).